We begin with the raw amino-acid sequence, 205 residues long: Spermatogenesis-associated protein 24 (205 aa).

The stretch at 17-166 (LALDQLRDVI…QQKQIFRNHM (150 aa)) forms a coiled coil. The required for interaction with CBX5 and TBPL1 stretch occupies residues 138–185 (EDILNGKENEIKELQQVISQQKQIFRNHMSDFRIQKQQESYMAQVLDQ). The segment at 180–205 (AQVLDQKHKKASGTRQARSHQHPREK) is disordered. Residues 186–205 (KHKKASGTRQARSHQHPREK) are compositionally biased toward basic residues.

It belongs to the SPATA24 family. Homodimer. Interacts with CBX3, CBX5, GMNN, GTF2B, TBPL1 and the polycomb proteins PHCF2, RNF2 and SCMH1 but not with CBX1 or PCGF2.

The protein resides in the cytoplasm. It localises to the nucleus. The protein localises to the nucleolus. Its subcellular location is the nucleoplasm. In terms of biological role, binds DNA with high affinity but does not bind to TATA boxes. Synergises with GMNN and TBP in activation of TATA box-containing promoters and with GMNN and TBPL1 in activation of the NF1 TATA-less promoter. May play a role in cytoplasm movement and removal during spermiogenesis. This is Spermatogenesis-associated protein 24 (SPATA24) from Homo sapiens (Human).